Here is a 107-residue protein sequence, read N- to C-terminus: U1-lycotoxin-Ls1b (107 aa).

A signal peptide spans 1–20 (MMKVLVVVALLVTLISYSSS). Positions 21-41 (EGIDDLEADELLSLMANEQTR) are excised as a propeptide. 4 disulfides stabilise this stretch: Cys44-Cys59, Cys51-Cys68, Cys58-Cys86, and Cys70-Cys84.

The protein belongs to the neurotoxin 19 (CSTX) family. 04 (U1-Lctx) subfamily. In terms of tissue distribution, expressed by the venom gland.

It is found in the secreted. This Lycosa singoriensis (Wolf spider) protein is U1-lycotoxin-Ls1b.